We begin with the raw amino-acid sequence, 156 residues long: Ribosomal RNA large subunit methyltransferase H (156 aa).

S-adenosyl-L-methionine-binding residues include leucine 72 and glycine 104.

It belongs to the RNA methyltransferase RlmH family. As to quaternary structure, homodimer.

It is found in the cytoplasm. It catalyses the reaction pseudouridine(1915) in 23S rRNA + S-adenosyl-L-methionine = N(3)-methylpseudouridine(1915) in 23S rRNA + S-adenosyl-L-homocysteine + H(+). Functionally, specifically methylates the pseudouridine at position 1915 (m3Psi1915) in 23S rRNA. This Maricaulis maris (strain MCS10) (Caulobacter maris) protein is Ribosomal RNA large subunit methyltransferase H.